We begin with the raw amino-acid sequence, 456 residues long: Exodeoxyribonuclease 7 large subunit (456 aa).

Belongs to the XseA family. Heterooligomer composed of large and small subunits.

The protein resides in the cytoplasm. The enzyme catalyses Exonucleolytic cleavage in either 5'- to 3'- or 3'- to 5'-direction to yield nucleoside 5'-phosphates.. Bidirectionally degrades single-stranded DNA into large acid-insoluble oligonucleotides, which are then degraded further into small acid-soluble oligonucleotides. The polypeptide is Exodeoxyribonuclease 7 large subunit (Escherichia coli (strain ATCC 8739 / DSM 1576 / NBRC 3972 / NCIMB 8545 / WDCM 00012 / Crooks)).